We begin with the raw amino-acid sequence, 492 residues long: Zinc finger protein 385B (492 aa).

Matrin-type zinc fingers lie at residues 8 to 44 (KKLL…VKQL) and 143 to 173 (ISCN…KLKA). A disordered region spans residues 159 to 206 (EAHYKGSKHAKKLKAQESPKNKQKSAVAQDSGTKTITSTSTNTTTTTT). Over residues 189–206 (SGTKTITSTSTNTTTTTT) the composition is skewed to low complexity. 2 Matrin-type zinc fingers span residues 303 to 337 (KKLL…LEAR) and 371 to 401 (FHCE…RVAG). The tract at residues 388 to 420 (QHISSRRHKDRVAGKPTKPKYSPYNKQQRSSSS) is disordered.

It localises to the nucleus. Its function is as follows. May play a role in p53/TP53-mediated apoptosis. The polypeptide is Zinc finger protein 385B (znf385b) (Danio rerio (Zebrafish)).